The chain runs to 77 residues: MPKRVLQGVVISSKADKTVTVKVERKFKHPIYKKFVKVSKKYAAHDSENKYQEGDKVSIIESRPISKTKTWVVVNGE.

The protein belongs to the universal ribosomal protein uS17 family. Part of the 30S ribosomal subunit.

In terms of biological role, one of the primary rRNA binding proteins, it binds specifically to the 5'-end of 16S ribosomal RNA. The chain is Small ribosomal subunit protein uS17 from Rickettsia conorii (strain ATCC VR-613 / Malish 7).